We begin with the raw amino-acid sequence, 367 residues long: Glutamate 5-kinase (367 aa).

Lysine 9 serves as a coordination point for ATP. Residues serine 49, aspartate 136, and asparagine 148 each coordinate substrate. ATP is bound by residues 168 to 169 and 210 to 216; these read TD and TGGMKSK. The PUA domain maps to 276–350; it reads SGQIEVDAGA…GMQSQDIQVR (75 aa).

This sequence belongs to the glutamate 5-kinase family.

It localises to the cytoplasm. It carries out the reaction L-glutamate + ATP = L-glutamyl 5-phosphate + ADP. Its pathway is amino-acid biosynthesis; L-proline biosynthesis; L-glutamate 5-semialdehyde from L-glutamate: step 1/2. Functionally, catalyzes the transfer of a phosphate group to glutamate to form L-glutamate 5-phosphate. This chain is Glutamate 5-kinase, found in Bacillus cereus (strain B4264).